Here is a 320-residue protein sequence, read N- to C-terminus: Cytochrome f (320 aa).

Residues 1–35 (MENRNTFSWVKEQMTRSISVSIMIYVITRTSISNA) form the signal peptide. Heme-binding residues include Tyr-36, Cys-56, Cys-59, and His-60. The chain crosses the membrane as a helical span at residues 286–306 (VQGLLFFFASVILAQVFLVLK).

It belongs to the cytochrome f family. In terms of assembly, the 4 large subunits of the cytochrome b6-f complex are cytochrome b6, subunit IV (17 kDa polypeptide, petD), cytochrome f and the Rieske protein, while the 4 small subunits are PetG, PetL, PetM and PetN. The complex functions as a dimer. Heme serves as cofactor.

Its subcellular location is the plastid. It localises to the chloroplast thylakoid membrane. Component of the cytochrome b6-f complex, which mediates electron transfer between photosystem II (PSII) and photosystem I (PSI), cyclic electron flow around PSI, and state transitions. The sequence is that of Cytochrome f from Oryza nivara (Indian wild rice).